Here is a 490-residue protein sequence, read N- to C-terminus: Betaine aldehyde dehydrogenase (490 aa).

Residues Thr-26, Ile-27, and Asp-93 each contribute to the K(+) site. NAD(+) is bound at residue 150 to 152 (GAW). Lys-162 (charge relay system) is an active-site residue. An NAD(+)-binding site is contributed by 176–179 (KPSE). Val-180 provides a ligand contact to K(+). Residue 230–233 (GTST) coordinates NAD(+). K(+) is bound at residue Leu-246. Glu-252 serves as the catalytic Proton acceptor. NAD(+) contacts are provided by Gly-254, Cys-286, and Glu-387. The Nucleophile role is filled by Cys-286. Cysteine sulfenic acid (-SOH) is present on Cys-286. Residues Lys-457 and Gly-460 each coordinate K(+). Residue Glu-464 is the Charge relay system of the active site.

The protein belongs to the aldehyde dehydrogenase family. As to quaternary structure, dimer of dimers. It depends on K(+) as a cofactor.

It carries out the reaction betaine aldehyde + NAD(+) + H2O = glycine betaine + NADH + 2 H(+). It functions in the pathway amine and polyamine biosynthesis; betaine biosynthesis via choline pathway; betaine from betaine aldehyde: step 1/1. In terms of biological role, involved in the biosynthesis of the osmoprotectant glycine betaine. Catalyzes the irreversible oxidation of betaine aldehyde to the corresponding acid. In Pseudomonas aeruginosa (strain UCBPP-PA14), this protein is Betaine aldehyde dehydrogenase.